Here is a 176-residue protein sequence, read N- to C-terminus: Ribosome maturation factor RimM (176 aa).

The region spanning 97 to 176 is the PRC barrel domain; it reads EDEFYWRDLI…QILVDWDPDF (80 aa).

This sequence belongs to the RimM family. As to quaternary structure, binds ribosomal protein uS19.

Its subcellular location is the cytoplasm. An accessory protein needed during the final step in the assembly of 30S ribosomal subunit, possibly for assembly of the head region. Essential for efficient processing of 16S rRNA. May be needed both before and after RbfA during the maturation of 16S rRNA. It has affinity for free ribosomal 30S subunits but not for 70S ribosomes. The protein is Ribosome maturation factor RimM of Shewanella oneidensis (strain ATCC 700550 / JCM 31522 / CIP 106686 / LMG 19005 / NCIMB 14063 / MR-1).